Here is a 331-residue protein sequence, read N- to C-terminus: Holliday junction branch migration complex subunit RuvB (331 aa).

Positions 1 to 186 are large ATPase domain (RuvB-L); that stretch reads MAKTMMQDRL…FGIVQRLEFY (186 aa). ATP contacts are provided by residues isoleucine 25, arginine 26, glycine 67, lysine 70, threonine 71, threonine 72, 133–135, arginine 176, tyrosine 186, and arginine 223; that span reads EDF. Threonine 71 contributes to the Mg(2+) binding site. The segment at 187–257 is small ATPAse domain (RuvB-S); it reads NIADLTTIVS…IAGSALDMLA (71 aa). The head domain (RuvB-H) stretch occupies residues 260–331; that stretch reads RRGLDHLDRR…LTQMAIDQML (72 aa). DNA-binding residues include arginine 296, arginine 315, and arginine 320.

The protein belongs to the RuvB family. In terms of assembly, homohexamer. Forms an RuvA(8)-RuvB(12)-Holliday junction (HJ) complex. HJ DNA is sandwiched between 2 RuvA tetramers; dsDNA enters through RuvA and exits via RuvB. An RuvB hexamer assembles on each DNA strand where it exits the tetramer. Each RuvB hexamer is contacted by two RuvA subunits (via domain III) on 2 adjacent RuvB subunits; this complex drives branch migration. In the full resolvosome a probable DNA-RuvA(4)-RuvB(12)-RuvC(2) complex forms which resolves the HJ.

It is found in the cytoplasm. It catalyses the reaction ATP + H2O = ADP + phosphate + H(+). In terms of biological role, the RuvA-RuvB-RuvC complex processes Holliday junction (HJ) DNA during genetic recombination and DNA repair, while the RuvA-RuvB complex plays an important role in the rescue of blocked DNA replication forks via replication fork reversal (RFR). RuvA specifically binds to HJ cruciform DNA, conferring on it an open structure. The RuvB hexamer acts as an ATP-dependent pump, pulling dsDNA into and through the RuvAB complex. RuvB forms 2 homohexamers on either side of HJ DNA bound by 1 or 2 RuvA tetramers; 4 subunits per hexamer contact DNA at a time. Coordinated motions by a converter formed by DNA-disengaged RuvB subunits stimulates ATP hydrolysis and nucleotide exchange. Immobilization of the converter enables RuvB to convert the ATP-contained energy into a lever motion, pulling 2 nucleotides of DNA out of the RuvA tetramer per ATP hydrolyzed, thus driving DNA branch migration. The RuvB motors rotate together with the DNA substrate, which together with the progressing nucleotide cycle form the mechanistic basis for DNA recombination by continuous HJ branch migration. Branch migration allows RuvC to scan DNA until it finds its consensus sequence, where it cleaves and resolves cruciform DNA. The polypeptide is Holliday junction branch migration complex subunit RuvB (Psychrobacter cryohalolentis (strain ATCC BAA-1226 / DSM 17306 / VKM B-2378 / K5)).